A 147-amino-acid polypeptide reads, in one-letter code: Large ribosomal subunit protein uL22 (147 aa).

Belongs to the universal ribosomal protein uL22 family. In terms of assembly, part of the 50S ribosomal subunit.

In terms of biological role, this protein binds specifically to 23S rRNA; its binding is stimulated by other ribosomal proteins, e.g. L4, L17, and L20. It is important during the early stages of 50S assembly. It makes multiple contacts with different domains of the 23S rRNA in the assembled 50S subunit and ribosome. Functionally, the globular domain of the protein is located near the polypeptide exit tunnel on the outside of the subunit, while an extended beta-hairpin is found that lines the wall of the exit tunnel in the center of the 70S ribosome. The sequence is that of Large ribosomal subunit protein uL22 from Fervidobacterium nodosum (strain ATCC 35602 / DSM 5306 / Rt17-B1).